The chain runs to 920 residues: Anillin-related medial ring protein mid1 (920 aa).

The interval 1–452 (MKEQEFSYRE…LSSEDLRHPS (452 aa)) is disordered. S15 and S24 each carry phosphoserine. A Phosphothreonine modification is found at T34. Phosphoserine occurs at positions 46 and 62. The short motif at 69 to 81 (LNVATDLLESLDL) is the Nuclear export sequence (NES) 1 element. The residue at position 95 (S95) is a Phosphoserine. Residues 461 to 481 (RTYSNYCENEPNKSSQSLVSS) show a composition bias toward polar residues. At S531 the chain carries Phosphoserine. The disordered stretch occupies residues 538-561 (DLPSQDKSTSYEVPNGTENQSPRP). The span at 542–561 (QDKSTSYEVPNGTENQSPRP) shows a compositional bias: polar residues. A cryptic lipid-binding C2 domain region spans residues 551-920 (PNGTENQSPR…WLQEYVNFMA (370 aa)). Residues 681 to 710 (RKFFDKLFNRRKKRKLNKAAAVENSKAKKS) carry the Nuclear localization sequence (NLS) motif. The Nuclear export sequence (NES) 2 motif lies at 763–773 (LGNLTLTCLYI). The 100-residue stretch at 802 to 901 (LYNEGYLYRL…WLQVMNSRSF (100 aa)) folds into the PH domain.

Homodimer. Interacts with blt1 and cdr2. Interacts with gef2. Interacts with plo1 and rng2. Interacts with fhk2 and sep1. Interacts with clp1. In terms of processing, phosphorylated. At the onset of mitosis, becomes hyperphosphorylated, leaves the nucleus, and forms a medial ring. Phosphorylation by plo1 and other kinases may contribute to solubilizing mid1 for export from the nucleus. Phosphorylation by sid2 drives removal from the cortex at the actomyosin contractile ring constriction onset.

It localises to the nucleus. Its subcellular location is the cytoplasm. It is found in the cell cortex. The protein localises to the cytoskeleton. In terms of biological role, scaffold protein that anchors the contractile ring (CR) at the cell equator during cytokinesis. At the onset of mitosis, membrane-bound oligomers of mid1 assemble recruitment platforms for cytokinetic ring components at the medial cortex and stabilize the ring position during its compaction. Recruits dephosphorylated myo2, but also rng2, clp1 and cdc15 to nodes and to place cytokinetic nodes around the cell equator the medial cortex to promote the ring assembly in cooperation with F-actin. Necessary to stabilize the mitotic spindle perpendicular to the axis of cell division. Also recruits the cdr2 kinase to the CR. Functionally, in the nucleus, binds to the promoter regions of M-G1 transcribed genes to negatively regulate their expression. The polypeptide is Anillin-related medial ring protein mid1 (Schizosaccharomyces pombe (strain 972 / ATCC 24843) (Fission yeast)).